We begin with the raw amino-acid sequence, 417 residues long: Inactive cytochrome P450 76AD1 (417 aa).

Residues 4 to 24 (ATLAMILAIWFISFHFIKLLF) form a helical membrane-spanning segment.

The protein belongs to the cytochrome P450 family.

The protein localises to the membrane. The protein operates within pigment biosynthesis; betalain biosynthesis. Inactive cytochrome unable to convert L-DOPA to cyclo-DOPA in the betalain pathway and producing a yellow mutant phenotype. A frameshift replaces 108 amino acids of the active protein found in red beets (AC I3PFJ5) with 27 new residues followed by a stop codon. This chain is Inactive cytochrome P450 76AD1, found in Beta vulgaris (Sugar beet).